The following is a 211-amino-acid chain: Putative transposase for insertion sequence element IS402 (211 aa).

A disordered region spans residues 51–71 (RRWGRPKTGPNPTDRARPGSK).

It belongs to the transposase 11 family.

Its function is as follows. Involved in the transposition of the insertion sequence. The sequence is that of Putative transposase for insertion sequence element IS402 from Burkholderia cepacia (Pseudomonas cepacia).